The sequence spans 130 residues: Small ribosomal subunit protein uS8 (130 aa).

This sequence belongs to the universal ribosomal protein uS8 family. As to quaternary structure, part of the 30S ribosomal subunit.

In terms of biological role, one of the primary rRNA binding proteins, it binds directly to 16S rRNA central domain where it helps coordinate assembly of the platform of the 30S subunit. This is Small ribosomal subunit protein uS8 (rps8) from Methanocaldococcus jannaschii (strain ATCC 43067 / DSM 2661 / JAL-1 / JCM 10045 / NBRC 100440) (Methanococcus jannaschii).